The primary structure comprises 277 residues: Orotidine 5'-phosphate decarboxylase (277 aa).

Substrate is bound by residues Asp40, 62 to 64 (KTH), 93 to 102 (DRKFIDIGNT), Tyr229, and Arg247. Lys95 serves as the catalytic Proton donor.

It belongs to the OMP decarboxylase family.

It catalyses the reaction orotidine 5'-phosphate + H(+) = UMP + CO2. The protein operates within pyrimidine metabolism; UMP biosynthesis via de novo pathway; UMP from orotate: step 2/2. This Aspergillus oryzae (strain ATCC 42149 / RIB 40) (Yellow koji mold) protein is Orotidine 5'-phosphate decarboxylase (pyrG).